Reading from the N-terminus, the 829-residue chain is Cap-specific mRNA (nucleoside-2'-O-)-methyltransferase 1 (829 aa).

Residues 1-68 (MKRAAQASDE…DSQNSQGSMA (68 aa)) form a disordered region. The short motif at 2 to 16 (KRAAQASDEPLKKRK) is the Bipartite nuclear localization signal element. Low complexity predominate over residues 31 to 44 (QRTTSQDSSQSESL). A compositionally biased stretch (polar residues) spans 55 to 68 (SRPSDSQNSQGSMA). In terms of domain architecture, G-patch spans 79–125 (YNNVSQKLMAKMGFREGEGLGKYGQGRKEIVEASTQRGRRGLGLMLK). Substrate contacts are provided by residues 195–199 (KTVFD) and R210. The 220-residue stretch at 223–442 (FFLNRAAMKM…ERYVVCKGLK (220 aa)) folds into the RrmJ-type SAM-dependent 2'-O-MTase domain. N226 provides a ligand contact to S-adenosyl-L-methionine. Residue K231 is part of the active site. S-adenosyl-L-methionine is bound by residues 269 to 275 (CAGPGGF) and 327 to 328 (DI). The active site involves D356. 366–368 (NLQ) serves as a coordination point for substrate. K396 serves as the catalytic Proton acceptor. N431 provides a ligand contact to substrate. A WW domain is found at 745–779 (KTVNDPWTMAFSKSSKRKFFYNKQTKESTYDLPAT).

The protein localises to the nucleus. The catalysed reaction is a 5'-end (N(7)-methyl 5'-triphosphoguanosine)-ribonucleoside in mRNA + S-adenosyl-L-methionine = a 5'-end (N(7)-methyl 5'-triphosphoguanosine)-(2'-O-methyl-ribonucleoside) in mRNA + S-adenosyl-L-homocysteine + H(+). S-adenosyl-L-methionine-dependent methyltransferase that mediates mRNA cap1 2'-O-ribose methylation to the 5'-cap structure of mRNAs. Methylates the ribose of the first nucleotide of a m(7)GpppG-capped mRNA and small nuclear RNA (snRNA) to produce m(7)GpppRm (cap1). Displays a preference for cap0 transcripts. Cap1 modification is linked to higher levels of translation. May be involved in the interferon response pathway. The protein is Cap-specific mRNA (nucleoside-2'-O-)-methyltransferase 1 (cmtr1) of Danio rerio (Zebrafish).